A 550-amino-acid polypeptide reads, in one-letter code: Glucose-6-phosphate isomerase (550 aa).

Catalysis depends on E356, which acts as the Proton donor. Residues H387 and K515 contribute to the active site.

It belongs to the GPI family.

It localises to the cytoplasm. The enzyme catalyses alpha-D-glucose 6-phosphate = beta-D-fructose 6-phosphate. The protein operates within carbohydrate biosynthesis; gluconeogenesis. It participates in carbohydrate degradation; glycolysis; D-glyceraldehyde 3-phosphate and glycerone phosphate from D-glucose: step 2/4. Catalyzes the reversible isomerization of glucose-6-phosphate to fructose-6-phosphate. This Vibrio cholerae serotype O1 (strain ATCC 39541 / Classical Ogawa 395 / O395) protein is Glucose-6-phosphate isomerase.